We begin with the raw amino-acid sequence, 395 residues long: Acetate kinase (395 aa).

Asparagine 10 provides a ligand contact to Mg(2+). Residue lysine 17 participates in ATP binding. Arginine 87 is a binding site for substrate. Aspartate 144 serves as the catalytic Proton donor/acceptor. ATP is bound by residues 204 to 208 (HLGNG), 279 to 281 (DMR), and 327 to 331 (GIGEN). Residue glutamate 381 coordinates Mg(2+).

It belongs to the acetokinase family. Homodimer. It depends on Mg(2+) as a cofactor. Mn(2+) serves as cofactor.

The protein resides in the cytoplasm. The enzyme catalyses acetate + ATP = acetyl phosphate + ADP. The protein operates within metabolic intermediate biosynthesis; acetyl-CoA biosynthesis; acetyl-CoA from acetate: step 1/2. Functionally, catalyzes the formation of acetyl phosphate from acetate and ATP. Can also catalyze the reverse reaction. The polypeptide is Acetate kinase (Stutzerimonas stutzeri (strain A1501) (Pseudomonas stutzeri)).